A 129-amino-acid polypeptide reads, in one-letter code: RxLR effector protein SFI6 (129 aa).

The N-terminal stretch at 1-16 (MTLVVLATGLLASGTA) is a signal peptide. The RxLR-dEER signature appears at 42–64 (RFLRSHQITDDKVEINEHGEEER).

Belongs to the RxLR effector family.

The protein localises to the secreted. Its subcellular location is the host cytoplasm. It localises to the host cell membrane. Its function is as follows. Effector that suppresses flg22-induced post-translational MAP kinase activation in tomato but not in Arabidopsis. The perception of highly conserved pathogen- or microbe-associated molecular patterns (PAMPs/MAMPs), such as flg22, triggers converging signaling pathways recruiting MAP kinase cascades and inducing transcriptional re-programming, yielding a generic antimicrobial response. This chain is RxLR effector protein SFI6, found in Phytophthora infestans (strain T30-4) (Potato late blight agent).